Reading from the N-terminus, the 44-residue chain is Antimicrobial peptide 1b (44 aa).

The Chitin-binding type-1 domain maps to A1–G42. 5 disulfides stabilise this stretch: C4/C19, C13/C25, C16/C43, C18/C32, and C36/C40.

Post-translationally, contains 5 disulfide bonds.

Functionally, binds chitin. Has antifungal activity against F.oxysporum 16/10 (IC(50)=4.1 uM) and B.sorokiniana 6/10 (IC(50)=2.7 uM). Inhibits germination of fungal spores. The polypeptide is Antimicrobial peptide 1b (Leymus arenarius (Lyme grass)).